A 356-amino-acid chain; its full sequence is Protein MGF 360-10L (356 aa).

Residues 57 to 89 (DLNTALMLATKENNYQLIKMFTDWGADINYGLI) form an ANK repeat. Asn172 carries an N-linked (GlcNAc...) asparagine; by host glycan. Residues 249 to 271 (NFLTIYYCFILGANINLAMIASI) form a helical membrane-spanning segment. N-linked (GlcNAc...) asparagine; by host glycosylation is found at Asn352 and Asn353.

The protein belongs to the asfivirus MGF 360 family.

Its subcellular location is the host membrane. Functionally, plays a role in virus cell tropism, and may be required for efficient virus replication in macrophages. This is Protein MGF 360-10L from African swine fever virus (isolate Tick/South Africa/Pretoriuskop Pr4/1996) (ASFV).